Reading from the N-terminus, the 224-residue chain is Thiamine-triphosphatase (224 aa).

Alanine 2 is subject to N-acetylalanine. One can recognise a CYTH domain in the interval 5–201; that stretch reads LIEVERKFAP…AKLMVYLQRF (197 aa). Residues glutamate 7 and glutamate 9 each coordinate Mg(2+). Substrate-binding residues include lysine 11, arginine 55, arginine 57, lysine 65, and arginine 125. Mg(2+) is bound by residues aspartate 145, glutamate 157, and glutamate 159. Glutamate 157 provides a ligand contact to substrate. Position 193 (lysine 193) interacts with substrate.

The protein belongs to the ThTPase family. In terms of assembly, monomer. Mg(2+) is required as a cofactor.

The protein localises to the cytoplasm. It carries out the reaction thiamine triphosphate + H2O = thiamine diphosphate + phosphate + H(+). Functionally, hydrolase highly specific for thiamine triphosphate (ThTP). In Mus musculus (Mouse), this protein is Thiamine-triphosphatase (Thtpa).